Reading from the N-terminus, the 771-residue chain is Carnitine O-palmitoyltransferase 1, muscle isoform (771 aa).

Topologically, residues 1–47 (MAEAHQAVAFQFTVTPEGVDFQLSREVLKHIYLSVIRSWKKRLIRIK) are cytoplasmic. Residues 48–73 (NGILRGVYPGSPTSWLVVVMATAGSS) traverse the membrane as a helical segment. The Mitochondrial intermembrane segment spans residues 74-101 (YYNVDISMGLVYYIQRWLPEGRPYRTPY). The helical transmembrane segment at 102–121 (TRTLFSMAIFSTGVWMMGIF) threads the bilayer. At 122-771 (FFRQTLKLLL…NLFQVPKADG (650 aa)) the chain is on the cytoplasmic side. Histidine 472 serves as the catalytic Proton acceptor. Residue 554–566 (GKGLIKKCRTSPD) coordinates CoA. (R)-carnitine contacts are provided by tyrosine 588 and threonine 601.

Belongs to the carnitine/choline acetyltransferase family.

The protein localises to the mitochondrion outer membrane. The catalysed reaction is (R)-carnitine + hexadecanoyl-CoA = O-hexadecanoyl-(R)-carnitine + CoA. Its pathway is lipid metabolism; fatty acid beta-oxidation. Functionally, catalyzes the transfer of the acyl group of long-chain fatty acid-CoA conjugates onto carnitine, an essential step for the mitochondrial uptake of long-chain fatty acids and their subsequent beta-oxidation in the mitochondrion. The chain is Carnitine O-palmitoyltransferase 1, muscle isoform (CPT1B) from Bos taurus (Bovine).